The sequence spans 210 residues: Potassium-transporting ATPase KdpC subunit (210 aa).

Residues 13–33 (LVTLVLLLVCGLAYPLILTGI) form a helical membrane-spanning segment.

Belongs to the KdpC family. In terms of assembly, the system is composed of three essential subunits: KdpA, KdpB and KdpC.

It is found in the cell membrane. Functionally, part of the high-affinity ATP-driven potassium transport (or Kdp) system, which catalyzes the hydrolysis of ATP coupled with the electrogenic transport of potassium into the cytoplasm. This subunit acts as a catalytic chaperone that increases the ATP-binding affinity of the ATP-hydrolyzing subunit KdpB by the formation of a transient KdpB/KdpC/ATP ternary complex. This is Potassium-transporting ATPase KdpC subunit from Clostridium kluyveri (strain ATCC 8527 / DSM 555 / NBRC 12016 / NCIMB 10680 / K1).